The following is a 292-amino-acid chain: MASSMRSLFTDHSRYVESFRRFLSNSTEHQCMQEFMDKKLPGIIARIGDIKSEIKILSIGGGAGEIDLQILSKVQAQYPGVHIINEVVEPSAEQITKYKELVAKTSNLENIKFAWHKETSSEYQNRMMEKKELQRWDFIHMIQMLYYVKDIPATLKFFHSLLATNAKILIIIVSGASSWQKLWEKYGSRLPRNDLCQYVTSSDLTQMLDKLGIKYEYYDLLSTMDISDCFIDGNENGDLLWDFLTETCNFNTTAPPDLKAEIMKDLQKPEFSIKKEGKVLFNNSLSFIVVEA.

Glu28 contributes to the substrate binding site. 5 residues coordinate S-adenosyl-L-methionine: Gly60, Glu89, Gln94, Ser120, and Ile142. Position 283 (Asn283) interacts with substrate.

The protein belongs to the class I-like SAM-binding methyltransferase superfamily. HNMT family. As to quaternary structure, monomer.

It is found in the cytoplasm. It carries out the reaction histamine + S-adenosyl-L-methionine = N(tau)-methylhistamine + S-adenosyl-L-homocysteine + H(+). Its function is as follows. Inactivates histamine by N-methylation. Plays an important role in degrading histamine and in regulating the airway response to histamine. The chain is Histamine N-methyltransferase (HNMT) from Bos taurus (Bovine).